The primary structure comprises 106 residues: uncharacterized protein (106 aa).

Disordered regions lie at residues 27–47 and 83–106; these read FSDSEDEPDDEASSSDKDVSD and SPAMLPRPAYRGIEREDRGGVQSK. The span at 29–39 shows a compositional bias: acidic residues; it reads DSEDEPDDEAS. Residues 94–106 show a composition bias toward basic and acidic residues; the sequence is GIEREDRGGVQSK.

It localises to the mitochondrion. This is an uncharacterized protein from Arabidopsis thaliana (Mouse-ear cress).